A 563-amino-acid chain; its full sequence is Probable tRNA (uracil-O(2)-)-methyltransferase (563 aa).

Residues 536 to 563 (TIRKAPCWMSLHHPDGCPVGQEACRYEH) form a C3H1-type zinc finger.

The protein belongs to the TRM44 family.

It localises to the cytoplasm. The catalysed reaction is uridine(44) in tRNA(Ser) + S-adenosyl-L-methionine = 2'-O-methyluridine(44) in tRNA(Ser) + S-adenosyl-L-homocysteine + H(+). Functionally, probable adenosyl-L-methionine (AdoMet)-dependent tRNA (uracil-O(2)-)-methyltransferase. This chain is Probable tRNA (uracil-O(2)-)-methyltransferase, found in Caenorhabditis elegans.